We begin with the raw amino-acid sequence, 150 residues long: D-aminoacyl-tRNA deacylase (150 aa).

The Gly-cisPro motif, important for rejection of L-amino acids signature appears at G136–P137.

Belongs to the DTD family. As to quaternary structure, homodimer.

The protein localises to the cytoplasm. The enzyme catalyses glycyl-tRNA(Ala) + H2O = tRNA(Ala) + glycine + H(+). It catalyses the reaction a D-aminoacyl-tRNA + H2O = a tRNA + a D-alpha-amino acid + H(+). Its function is as follows. An aminoacyl-tRNA editing enzyme that deacylates mischarged D-aminoacyl-tRNAs. Also deacylates mischarged glycyl-tRNA(Ala), protecting cells against glycine mischarging by AlaRS. Acts via tRNA-based rather than protein-based catalysis; rejects L-amino acids rather than detecting D-amino acids in the active site. By recycling D-aminoacyl-tRNA to D-amino acids and free tRNA molecules, this enzyme counteracts the toxicity associated with the formation of D-aminoacyl-tRNA entities in vivo and helps enforce protein L-homochirality. This is D-aminoacyl-tRNA deacylase from Staphylococcus saprophyticus subsp. saprophyticus (strain ATCC 15305 / DSM 20229 / NCIMB 8711 / NCTC 7292 / S-41).